A 799-amino-acid polypeptide reads, in one-letter code: Serine/threonine-protein kinase AfsK (799 aa).

The Protein kinase domain occupies 16–271 (FEVLGRLGAG…QAQLAPHLFG (256 aa)). ATP contacts are provided by residues 22-30 (LGAGGMGLV) and Lys-44. A Phosphoserine; by autocatalysis modification is found at Ser-71. The Proton acceptor role is filled by Asp-138. Thr-168 bears the Phosphothreonine; by autocatalysis mark. Disordered regions lie at residues 295 to 343 (RRNG…PAPP) and 393 to 426 (LAAS…PAGW). 2 stretches are compositionally biased toward pro residues: residues 325-343 (HAPP…PAPP) and 411-421 (VPAPAPAPPEA).

The protein belongs to the protein kinase superfamily. Ser/Thr protein kinase family. Interacts (via the N-terminal kinase domain) with KbpA; the interaction prevents autophosphorylation of AfsK. Autophosphorylated mainly on threonine residues. Some phosphorylation on serine residues. Autophosphorylation on Thr-168 is the major site enhancing kinase activity towards AfsR, and is regulated though interaction with KbpA.

The catalysed reaction is L-seryl-[protein] + ATP = O-phospho-L-seryl-[protein] + ADP + H(+). The enzyme catalyses L-threonyl-[protein] + ATP = O-phospho-L-threonyl-[protein] + ADP + H(+). Functionally, involved in the regulation of secondary metabolism by phosphorylating, on both Ser and Thr, the AfsR global regulatory protein involved in the control of secondary metabolism. This is Serine/threonine-protein kinase AfsK (afsK) from Streptomyces coelicolor (strain ATCC BAA-471 / A3(2) / M145).